The primary structure comprises 367 residues: Cobalt-precorrin-5B C(1)-methyltransferase (367 aa).

Belongs to the CbiD family.

The enzyme catalyses Co-precorrin-5B + S-adenosyl-L-methionine = Co-precorrin-6A + S-adenosyl-L-homocysteine. It participates in cofactor biosynthesis; adenosylcobalamin biosynthesis; cob(II)yrinate a,c-diamide from sirohydrochlorin (anaerobic route): step 6/10. In terms of biological role, catalyzes the methylation of C-1 in cobalt-precorrin-5B to form cobalt-precorrin-6A. The protein is Cobalt-precorrin-5B C(1)-methyltransferase of Leptospira interrogans serogroup Icterohaemorrhagiae serovar Lai (strain 56601).